A 624-amino-acid polypeptide reads, in one-letter code: MFHGTVTEELTSHEEWSHYNENIREGQKDFVFVKFNGLHLKSMENLQSCISLRVCIFSNNFITDIHPLQSCIKLIKLDLHGNQIKSLPNTKFWNGLKNLKLLYLHDNGFAKLKNICVLSACPTLIALTMFDCPVSLKKGYRHVLVNSIWPLKALDHHVISDEEIIQNWHLPERFKACNHRLFFNFCPALRKGTTYEEEINNIKHITSKINAILAHNSPVLIVQRWIRGFLVRKNLSPVFFHKKKQQEKIIRGYEAKWIYITKGYEDKLLKDLFFKPETNIKGKLAYWKHNIYYPVDLKNSSEHRKHVSSILCELKPKDLGMKSKTSRHLIQKGQESEDEIVDEKLDTSFRISVFKLPIYTSGSLKNNAVLREKKQHFFPAYPQPIYTTHPKPIIKKDIRLERSMKEFFAPQRAGMKLRTFSDIDKYYTEQKKQEYHKEKVRVVAMAQVARERVRVAVNEHLNQKKYATQKLIEENKETIQNSLRQVWQNRFNYLEKARERKALFLKEKSQKASERLLVQNLNNERTLLTRGLLKIDRLEKNEAVLKEKSLIVKQKLKAEKYRKNLLKEMKKVRSQEIYKRHCEEKFVMDMIAFEKACERLQDAKTKVAIVKTNLDFKVPNGLIK.

LRR repeat units lie at residues 51–72 (SLRV…QSCI), 73–94 (KLIK…KFWN), and 98–119 (NLKL…CVLS). In terms of domain architecture, LRRCT spans 132-179 (CPVSLKKGYRHVLVNSIWPLKALDHHVISDEEIIQNWHLPERFKACNH). Residues 215–244 (HNSPVLIVQRWIRGFLVRKNLSPVFFHKKK) enclose the IQ domain. A coiled-coil region spans residues 553–614 (KQKLKAEKYR…TKVAIVKTNL (62 aa)).

The protein is Leucine-rich repeat and IQ domain-containing protein 3 (LRRIQ3) of Homo sapiens (Human).